A 110-amino-acid polypeptide reads, in one-letter code: UPF0060 membrane protein Ajs_2087 (110 aa).

Helical transmembrane passes span 7–27, 33–53, 63–83, and 86–106; these read LALF…PWLW, SAWL…LLTL, AAYG…VDGV, and GPWD…IAFA.

The protein belongs to the UPF0060 family.

It is found in the cell inner membrane. This Acidovorax sp. (strain JS42) protein is UPF0060 membrane protein Ajs_2087.